The following is an 82-amino-acid chain: Putative antitoxin Saci_0468 (82 aa).

This sequence belongs to the UPF0330 family.

Its function is as follows. Possibly the antitoxin component of a type II toxin-antitoxin (TA) system. This Sulfolobus acidocaldarius (strain ATCC 33909 / DSM 639 / JCM 8929 / NBRC 15157 / NCIMB 11770) protein is Putative antitoxin Saci_0468.